The sequence spans 613 residues: Secretogranin-2 (613 aa).

The N-terminal stretch at 1–27 is a signal peptide; it reads MAEAKTHWLGAVLSLIPLIFLLSEAEA. Positions 28-30 are excised as a propeptide; sequence ASF. Disordered stretches follow at residues 67 to 105 and 119 to 146; these read QQAH…DSLS and QAEN…PMDM. Residues 92-105 are compositionally biased toward basic and acidic residues; that stretch reads ENGDLPESSRDSLS. Tyr-150 is modified (sulfotyrosine). Phosphoserine is present on residues Ser-173, Ser-267, Ser-428, Ser-528, Ser-551, and Ser-552. A compositionally biased stretch (basic and acidic residues) spans 257-283; the sequence is ESQTQEEVRDSKENADKTEQINDEMKR. Residues 257–287 are disordered; it reads ESQTQEEVRDSKENADKTEQINDEMKRSGQL. Over residues 546–557 the composition is skewed to basic and acidic residues; the sequence is HLSQHSSQETDK. Residues 546 to 580 form a disordered region; that stretch reads HLSQHSSQETDKLASVSKRLPVGTPKSDDTPNRPY.

The protein belongs to the chromogranin/secretogranin protein family. Interacts with Secretogranin III/SCG3. As to expression, highest levels detected in anterior pituitary followed by adrenal medulla and posterior pituitary (at protein level). In the brain, high levels are found in the hypothalamus, comparable to those present in posterior pituitary with two- to six-fold lower levels present in the other brain regions investigated including caudate nucleus, hippocampus, thalamus and brainstem (at protein level).

Its subcellular location is the secreted. Neuroendocrine protein of the granin family that regulates the biogenesis of secretory granules. The chain is Secretogranin-2 (SCG2) from Bos taurus (Bovine).